The chain runs to 157 residues: uncharacterized protein (157 aa).

The protein belongs to the MG067/MG068/MG395 family.

This is an uncharacterized protein from Mycoplasma pneumoniae (strain ATCC 29342 / M129 / Subtype 1) (Mycoplasmoides pneumoniae).